The chain runs to 120 residues: MTTQEFIDAIKGMTVLELNDLVKACEEEFGVSAAAGVVVAAAGPAEAAEEKTEFDVELTDVGANKVKVIKVVREVTGLGLKEAKDVVDGAPKVLKEAASKEEADDIKAKLEAEGAKVTLK.

Belongs to the bacterial ribosomal protein bL12 family. As to quaternary structure, homodimer. Part of the ribosomal stalk of the 50S ribosomal subunit. Forms a multimeric L10(L12)X complex, where L10 forms an elongated spine to which 2 to 4 L12 dimers bind in a sequential fashion. Binds GTP-bound translation factors.

Functionally, forms part of the ribosomal stalk which helps the ribosome interact with GTP-bound translation factors. Is thus essential for accurate translation. In Lachnoclostridium phytofermentans (strain ATCC 700394 / DSM 18823 / ISDg) (Clostridium phytofermentans), this protein is Large ribosomal subunit protein bL12.